The primary structure comprises 154 residues: Small ribosomal subunit protein uS13 (154 aa).

Belongs to the universal ribosomal protein uS13 family.

The protein localises to the cytoplasm. Located at the top of the head of the 40S subunit, it contacts several helices of the 18S rRNA. The polypeptide is Small ribosomal subunit protein uS13 (rps18) (Dictyostelium discoideum (Social amoeba)).